The primary structure comprises 501 residues: Eukaryotic translation initiation factor 3 subunit E (501 aa).

Residues 245–423 form the PCI domain; the sequence is CDLFFYTPYL…ESIESTSTNV (179 aa). Phosphoserine occurs at positions 477 and 479.

Belongs to the eIF-3 subunit E family. Component of the eukaryotic translation initiation factor 3 (eIF-3) complex. The eIF-3 complex appears to include tif32/eif3a, SPAC25G10.08/eif3b, tif33/eif3c, SPBC4C3.07/eif3f, tif35/eif3g and sum1/eif3i. This set of common subunits may also associate exclusively with either moe1/eif3d and int6/eif3e, or with SPAC821.05/eif3h and SPAC1751.03/eif3m. The eIF-3 complex may also include SPAC3A12.13c/eif3j. Also interacts with the proteasome via rpn501/rpn502.

It is found in the cytoplasm. In terms of biological role, component of the eukaryotic translation initiation factor 3 (eIF-3) complex, which is involved in protein synthesis of a specialized repertoire of mRNAs and, together with other initiation factors, stimulates binding of mRNA and methionyl-tRNAi to the 40S ribosome. The eIF-3 complex specifically targets and initiates translation of a subset of mRNAs involved in cell proliferation (Potential). Required for maintaining the basal level of atf1 and for transcriptional activation of core environmental stress response genes (CESR genes) in response to histidine starvation. May positively regulate proteasome activity. Required for nuclear localization of the proteasome subunit rpn501/rpn502. The chain is Eukaryotic translation initiation factor 3 subunit E (int6) from Schizosaccharomyces pombe (strain 972 / ATCC 24843) (Fission yeast).